Consider the following 443-residue polypeptide: ATP-dependent protease ATPase subunit HslU (443 aa).

ATP is bound by residues isoleucine 19, 61–66, aspartate 256, glutamate 321, and arginine 393; that span reads GVGKTE.

This sequence belongs to the ClpX chaperone family. HslU subfamily. A double ring-shaped homohexamer of HslV is capped on each side by a ring-shaped HslU homohexamer. The assembly of the HslU/HslV complex is dependent on binding of ATP.

It localises to the cytoplasm. ATPase subunit of a proteasome-like degradation complex; this subunit has chaperone activity. The binding of ATP and its subsequent hydrolysis by HslU are essential for unfolding of protein substrates subsequently hydrolyzed by HslV. HslU recognizes the N-terminal part of its protein substrates and unfolds these before they are guided to HslV for hydrolysis. In Ralstonia pickettii (strain 12J), this protein is ATP-dependent protease ATPase subunit HslU.